A 154-amino-acid chain; its full sequence is Cysteine-rich DPF motif domain-containing protein 1 (154 aa).

The protein belongs to the CDPF1 family.

This is Cysteine-rich DPF motif domain-containing protein 1 from Drosophila melanogaster (Fruit fly).